Consider the following 255-residue polypeptide: Type III pantothenate kinase (255 aa).

An ATP-binding site is contributed by 6–13 (DVGNTNTV). 108–111 (GADR) contacts substrate. Asp110 functions as the Proton acceptor in the catalytic mechanism. Residue Asp130 coordinates K(+). Thr133 lines the ATP pocket. Thr185 provides a ligand contact to substrate.

Belongs to the type III pantothenate kinase family. Homodimer. NH4(+) is required as a cofactor. Requires K(+) as cofactor.

Its subcellular location is the cytoplasm. The catalysed reaction is (R)-pantothenate + ATP = (R)-4'-phosphopantothenate + ADP + H(+). It functions in the pathway cofactor biosynthesis; coenzyme A biosynthesis; CoA from (R)-pantothenate: step 1/5. Catalyzes the phosphorylation of pantothenate (Pan), the first step in CoA biosynthesis. The chain is Type III pantothenate kinase from Hyphomonas neptunium (strain ATCC 15444).